Here is a 446-residue protein sequence, read N- to C-terminus: Tripartite motif-containing protein 43C (446 aa).

Residues 16 to 57 (CSICQGIFMDPVYLRCGHKFCETCLLLFQEDIKFPAYCPTCR) form an RING-type zinc finger. A B box-type zinc finger spans residues 88-129 (SEEHKCVTHKAKKMIFCDKSKILLCHLCSDSQEHSGHTHCSI). Zn(2+) contacts are provided by C93, H96, C115, and H121. Residues 271-446 (RLRAHSIPGL…VRPFFFAAYT (176 aa)) enclose the B30.2/SPRY domain.

It belongs to the TRIM/RBCC family.

This is Tripartite motif-containing protein 43C from Mus musculus (Mouse).